The following is a 229-amino-acid chain: Cytochrome c oxidase subunit 2 (229 aa).

The Mitochondrial intermembrane portion of the chain corresponds to 1 to 26 (MANWTQLGLQDASSPLMEELIYFHDY). Residues 27–48 (TLIILTLITILVFYGLASLIVS) form a helical membrane-spanning segment. At 49-62 (SNTNRFFLEGQSLE) the chain is on the mitochondrial matrix side. Residues 63-82 (TIWTVIPAVILIFIALPSLQ) traverse the membrane as a helical segment. The Mitochondrial intermembrane segment spans residues 83–229 (LLYLIDEVNN…ENWVSNFLNE (147 aa)). Residues His161, Cys196, Glu198, Cys200, His204, and Met207 each contribute to the Cu cation site. Glu198 serves as a coordination point for Mg(2+).

Belongs to the cytochrome c oxidase subunit 2 family. As to quaternary structure, component of the cytochrome c oxidase (complex IV, CIV), a multisubunit enzyme composed of a catalytic core of 3 subunits and several supernumerary subunits. The complex exists as a monomer or a dimer and forms supercomplexes (SCs) in the inner mitochondrial membrane with ubiquinol-cytochrome c oxidoreductase (cytochrome b-c1 complex, complex III, CIII). It depends on Cu cation as a cofactor.

Its subcellular location is the mitochondrion inner membrane. The enzyme catalyses 4 Fe(II)-[cytochrome c] + O2 + 8 H(+)(in) = 4 Fe(III)-[cytochrome c] + 2 H2O + 4 H(+)(out). Functionally, component of the cytochrome c oxidase, the last enzyme in the mitochondrial electron transport chain which drives oxidative phosphorylation. The respiratory chain contains 3 multisubunit complexes succinate dehydrogenase (complex II, CII), ubiquinol-cytochrome c oxidoreductase (cytochrome b-c1 complex, complex III, CIII) and cytochrome c oxidase (complex IV, CIV), that cooperate to transfer electrons derived from NADH and succinate to molecular oxygen, creating an electrochemical gradient over the inner membrane that drives transmembrane transport and the ATP synthase. Cytochrome c oxidase is the component of the respiratory chain that catalyzes the reduction of oxygen to water. Electrons originating from reduced cytochrome c in the intermembrane space (IMS) are transferred via the dinuclear copper A center (CU(A)) of subunit 2 and heme A of subunit 1 to the active site in subunit 1, a binuclear center (BNC) formed by heme A3 and copper B (CU(B)). The BNC reduces molecular oxygen to 2 water molecules using 4 electrons from cytochrome c in the IMS and 4 protons from the mitochondrial matrix. The polypeptide is Cytochrome c oxidase subunit 2 (COII) (Pisaster ochraceus (Ochre sea star)).